Consider the following 434-residue polypeptide: Eukaryotic peptide chain release factor subunit 1-1 (434 aa).

It belongs to the eukaryotic release factor 1 family. Heterodimer of two subunits, one of which binds GTP.

It is found in the cytoplasm. In terms of biological role, directs the termination of nascent peptide synthesis (translation) in response to the termination codons UAA, UAG and UGA. Modulates plant growth and development. The protein is Eukaryotic peptide chain release factor subunit 1-1 of Brassica oleracea var. botrytis (Cauliflower).